A 210-amino-acid polypeptide reads, in one-letter code: Large ribosomal subunit protein uL3 (210 aa).

Glutamine 151 carries the N5-methylglutamine modification.

The protein belongs to the universal ribosomal protein uL3 family. As to quaternary structure, part of the 50S ribosomal subunit. Forms a cluster with proteins L14 and L19. Methylated by PrmB.

One of the primary rRNA binding proteins, it binds directly near the 3'-end of the 23S rRNA, where it nucleates assembly of the 50S subunit. This chain is Large ribosomal subunit protein uL3, found in Aeromonas hydrophila subsp. hydrophila (strain ATCC 7966 / DSM 30187 / BCRC 13018 / CCUG 14551 / JCM 1027 / KCTC 2358 / NCIMB 9240 / NCTC 8049).